The chain runs to 291 residues: uncharacterized protein (291 aa).

Positions 68 to 205 (PVAVSASFLW…VIQLWARPRG (138 aa)) constitute a DAGKc domain.

This is an uncharacterized protein from Mycobacterium tuberculosis (strain CDC 1551 / Oshkosh).